We begin with the raw amino-acid sequence, 286 residues long: ATP synthase gamma chain (286 aa).

It belongs to the ATPase gamma chain family. As to quaternary structure, F-type ATPases have 2 components, CF(1) - the catalytic core - and CF(0) - the membrane proton channel. CF(1) has five subunits: alpha(3), beta(3), gamma(1), delta(1), epsilon(1). CF(0) has three main subunits: a, b and c.

The protein localises to the cell inner membrane. Functionally, produces ATP from ADP in the presence of a proton gradient across the membrane. The gamma chain is believed to be important in regulating ATPase activity and the flow of protons through the CF(0) complex. The chain is ATP synthase gamma chain from Teredinibacter turnerae (strain ATCC 39867 / T7901).